Here is a 605-residue protein sequence, read N- to C-terminus: Terpenoid synthase 18 (605 aa).

Mg(2+) contacts are provided by Asp-356, Asp-360, Asn-500, Thr-504, and Glu-508. Positions 356 to 360 (DDTYD) match the DDXXD motif motif.

It belongs to the terpene synthase family. Tpsa subfamily. Mg(2+) is required as a cofactor. Requires Mn(2+) as cofactor. As to expression, predominantly expressed in flowers and siliques but also in roots and leaves.

It localises to the cytoplasm. It participates in secondary metabolite biosynthesis; terpenoid biosynthesis. In Arabidopsis thaliana (Mouse-ear cress), this protein is Terpenoid synthase 18 (TPS18).